A 357-amino-acid chain; its full sequence is Cinnamyl alcohol dehydrogenase 1 (357 aa).

Cys47 lines the Zn(2+) pocket. Thr49 contacts NADP(+). Zn(2+)-binding residues include His69, Glu70, Cys100, Cys103, Cys106, Cys114, and Cys163. NADP(+) contacts are provided by residues Thr167, 188–193 (GLGGVG), 211–216 (SSSDKK), Thr251, Gly275, and 298–300 (SFI).

It belongs to the zinc-containing alcohol dehydrogenase family. Homodimer. It depends on Zn(2+) as a cofactor. Expressed in leaves, mainly in peltate glands.

The catalysed reaction is (E)-cinnamyl alcohol + NADP(+) = (E)-cinnamaldehyde + NADPH + H(+). The enzyme catalyses (E)-coniferol + NADP(+) = (E)-coniferaldehyde + NADPH + H(+). It carries out the reaction (E)-sinapyl alcohol + NADP(+) = (E)-sinapaldehyde + NADPH + H(+). It catalyses the reaction (E)-4-coumaroyl alcohol + NADP(+) = (E)-4-coumaraldehyde + NADPH + H(+). The catalysed reaction is (E)-caffeyl alcohol + NADP(+) = (E)-caffeyl aldehyde + NADPH + H(+). Its pathway is aromatic compound metabolism; phenylpropanoid biosynthesis. Its activity is regulated as follows. 60% inhibition by 5 mM Ca(+), Mg(+) or Cu(+). Its function is as follows. Involved in the production of citral, a mixture of geranial and neral with a strong lemony scent. Reversibly oxidizes geraniol to produce geranial at half the efficiency compared with its activity with cinnamyl alcohol. Does not use nerol and neral as substrates. This is Cinnamyl alcohol dehydrogenase 1 (CAD1) from Ocimum basilicum (Sweet basil).